Consider the following 358-residue polypeptide: tRNA-specific 2-thiouridylase MnmA (358 aa).

ATP is bound by residues 7–14 and Met33; that span reads AMSGGVDS. The active-site Nucleophile is Cys102. Residues Cys102 and Cys199 are joined by a disulfide bond. Gly126 serves as a coordination point for ATP. The tract at residues 149–151 is interaction with tRNA; the sequence is KDQ. Residue Cys199 is the Cysteine persulfide intermediate of the active site. The interval 305 to 306 is interaction with tRNA; that stretch reads RY.

The protein belongs to the MnmA/TRMU family.

It localises to the cytoplasm. The catalysed reaction is S-sulfanyl-L-cysteinyl-[protein] + uridine(34) in tRNA + AH2 + ATP = 2-thiouridine(34) in tRNA + L-cysteinyl-[protein] + A + AMP + diphosphate + H(+). In terms of biological role, catalyzes the 2-thiolation of uridine at the wobble position (U34) of tRNA, leading to the formation of s(2)U34. In Halothermothrix orenii (strain H 168 / OCM 544 / DSM 9562), this protein is tRNA-specific 2-thiouridylase MnmA.